We begin with the raw amino-acid sequence, 301 residues long: tRNA dimethylallyltransferase 2 (301 aa).

Position 11 to 18 (11 to 18 (GATASGKT)) interacts with ATP. Residue 13–18 (TASGKT) coordinates substrate. Positions 36–39 (DSRQ) are interaction with substrate tRNA.

It belongs to the IPP transferase family. As to quaternary structure, monomer. The cofactor is Mg(2+).

The catalysed reaction is adenosine(37) in tRNA + dimethylallyl diphosphate = N(6)-dimethylallyladenosine(37) in tRNA + diphosphate. In terms of biological role, catalyzes the transfer of a dimethylallyl group onto the adenine at position 37 in tRNAs that read codons beginning with uridine, leading to the formation of N6-(dimethylallyl)adenosine (i(6)A). This Shewanella sediminis (strain HAW-EB3) protein is tRNA dimethylallyltransferase 2.